The sequence spans 386 residues: Prostatic acid phosphatase (386 aa).

A signal peptide spans 1–32 (MRAAPLLLARAASLSLGFLFLLFFWLDRSVLA). A substrate-binding site is contributed by R43. H44 (nucleophile) is an active-site residue. A substrate-binding site is contributed by R47. N94 carries an N-linked (GlcNAc...) asparagine glycan. R111 contacts substrate. Cystine bridges form between C161-C372, C215-C313, and C347-C351. The N-linked (GlcNAc...) asparagine glycan is linked to N220. H289 contributes to the substrate binding site. Catalysis depends on D290, which acts as the Proton donor. The N-linked (GlcNAc...) asparagine glycan is linked to N333.

The protein belongs to the histidine acid phosphatase family. As to quaternary structure, homodimer; dimer formation is required for phosphatase activity. In terms of processing, N-glycosylated. High mannose content, partially sialylated and fucosylated biantennary complex. Also fucosylated with partially sialylated triantennary complex oligosaccharides. Proteolytically cleaved in seminal fluid to produce several peptides. Peptide PAPf39, the most prominent, forms amyloid beta-sheet fibrils, SEVI (semen-derived enhancer of viral infection). As to expression, highly expressed in the prostate, restricted to glandular and ductal epithelial cells. Also expressed in bladder, kidney, pancreas, lung, cervix, testis and ovary. Weak expression in a subset of pancreatic islet cells, squamous epithelia, the pilosebaceous unit, colonic neuroendocrine cells and skin adnexal structures. Low expression in prostate carcinoma cells and tissues. In terms of tissue distribution, widely expressed. Expressed in the sarcolemma of skeletal muscle.

The protein resides in the secreted. The protein localises to the cell membrane. It is found in the lysosome membrane. It localises to the nucleus. Its subcellular location is the cytoplasm. The protein resides in the cytosol. It catalyses the reaction a phosphate monoester + H2O = an alcohol + phosphate. The catalysed reaction is 1-(9Z-octadecenoyl)-sn-glycero-3-phosphate + H2O = 1-(9Z-octadecenoyl)-sn-glycerol + phosphate. It carries out the reaction a ribonucleoside 5'-phosphate + H2O = a ribonucleoside + phosphate. The enzyme catalyses O-phospho-L-tyrosyl-[protein] + H2O = L-tyrosyl-[protein] + phosphate. With respect to regulation, phosphatase activity inhibited by L(+)-tartrate, and by its derivative, alpha-benzylaminobenzylphosphonic acid. A non-specific tyrosine phosphatase that dephosphorylates a diverse number of substrates under acidic conditions (pH 4-6) including alkyl, aryl, and acyl orthophosphate monoesters and phosphorylated proteins. Has lipid phosphatase activity and inactivates lysophosphatidic acid in seminal plasma. Functionally, tyrosine phosphatase that acts as a tumor suppressor of prostate cancer through dephosphorylation of ERBB2 and deactivation of MAPK-mediated signaling. In addition to its tyrosine phosphatase activity has ecto-5'-nucleotidase activity in dorsal root ganglion (DRG) neurons. Generates adenosine from AMP which acts as a pain suppressor. Its function is as follows. (Microbial infection) Forms amyloid beta-sheet fibrils in semen. These fibrils, termed SEVI (semen-derived enhancer of viral infection) capture HIV virions, attach them to target cells and enhance infection. SEVI amyloid fibrils are degraded by polyphenol epigallocatechin-3-gallate (EGCG), a constituent of green tea. Target cell attachment and enhancement of HIV infection is inhibited by surfen. Also similarly boosts XMRV (xenotropic murine leukemia virus-related virus) infection. The polypeptide is Prostatic acid phosphatase (Homo sapiens (Human)).